The chain runs to 904 residues: MICAL-like protein 2 (904 aa).

Residues 1-107 (MAAIRALQQW…YVSQYYNYFH (107 aa)) enclose the Calponin-homology (CH) domain. Residues 1-260 (MAAIRALQQW…KLTGLVPRQP (260 aa)) are forms an intramolecular interaction with the C-terminal coiled coil domain keeping the protein in a closed conformation. Residues serine 110, serine 143, and serine 153 each carry the phosphoserine modification. Residues 117-178 (GVKRASEDSE…GGPPPKTDQA (62 aa)) form a disordered region. Residues 143 to 153 (SPAPARKPPLS) are compositionally biased toward pro residues. The LIM zinc-binding domain maps to 186–248 (STCGVCGKHV…TSHLPAAASA (63 aa)). At serine 249 the chain carries Phosphoserine. Positions 251–722 (KLTGLVPRQP…PANVPALPGE (472 aa)) are disordered. The segment at 261 to 388 (GAMGVDSRTS…GGAPRVAAPQ (128 aa)) is necessary and sufficient for interaction with actinins. The tract at residues 261-697 (GAMGVDSRTS…EARVQSWKEE (437 aa)) is mediates targeting to the cell plasma membrane. Over residues 267–277 (SRTSCSPQKAQ) the composition is skewed to polar residues. 2 stretches are compositionally biased toward low complexity: residues 293 to 314 (NSPARASVPAAPNPAATSATSV) and 349 to 362 (SSAAPCTAAAASHP). Position 294 is a phosphoserine (serine 294). Over residues 363 to 374 (AVPPSAPDPRPA) the composition is skewed to pro residues. Positions 385–400 (AAPQTTLSSSSTSAAT) are enriched in low complexity. The span at 408–433 (PSASRTQQARNKFFQTSAVPPGTSLS) shows a compositional bias: polar residues. The segment covering 459-480 (ALSALEEAGAPAPGRPSPATAA) has biased composition (low complexity). A phosphoserine mark is found at serine 494 and serine 504. Low complexity-rich tracts occupy residues 520 to 534 (LSTSSTSQASALPPA) and 542 to 553 (SSGVGRVGAGSR). A compositionally biased stretch (polar residues) spans 564 to 578 (KSTTLTQDMSTSLQE). Residues 593-622 (PVDRRSPAERTLKPKEPRALAEPRAGEAPR) show a composition bias toward basic and acidic residues. Phosphoserine is present on serine 598. Threonine 644 is modified (phosphothreonine). Over residues 647-661 (PASPGPSLPARSPSP) the composition is skewed to pro residues. A phosphoserine mark is found at serine 649, serine 658, serine 660, and serine 726. The tract at residues 698-807 (EKKPHLQGKP…LMYKSKAQRL (110 aa)) is forms an intramolecular interaction with the N-terminal Calponin-homology and LIM zinc-binding domains-containing region keeping the protein in a closed conformation. The bMERB domain occupies 723-874 (TVTSPVRLHP…EQEEDQMLRD (152 aa)). Residues 735–771 (LSPEEIQRQLQDIERRLDALELRGVELEKRLRAAEGD) are a coiled coil. The segment at 807 to 903 (LEEQQLDIEG…WSPKSKSSPS (97 aa)) is mediates interaction with RAB13 and is required for transition from the closed to the opened conformation.

As to quaternary structure, interacts with RAB13 (GTP-bound form); competes with RAB8A and is involved in tight junctions assembly. Interacts with RAB8A; competes with RAB13 and is involved in E-cadherin endocytic recycling. Interacts with RAB8B. Interacts (preferentially in opened conformation) with ACTN1 and ACTN4; stimulated by RAB13 activation. Interacts (via calponin-homology (CH) domain) with the filamins FLNA, FLNB and FLNC (via actin-binding domain).

It localises to the cell membrane. It is found in the cell junction. Its subcellular location is the tight junction. The protein resides in the recycling endosome. The protein localises to the cell projection. It localises to the cytoplasm. It is found in the cytoskeleton. Functionally, effector of small Rab GTPases which is involved in junctional complexes assembly through the regulation of cell adhesion molecules transport to the plasma membrane and actin cytoskeleton reorganization. Regulates the endocytic recycling of occludins, claudins and E-cadherin to the plasma membrane and may thereby regulate the establishment of tight junctions and adherens junctions. In parallel, may regulate actin cytoskeleton reorganization directly through interaction with F-actin or indirectly through actinins and filamins. Most probably involved in the processes of epithelial cell differentiation, cell spreading and neurite outgrowth. Undergoes liquid-liquid phase separation to form tubular recycling endosomes. Plays 2 sequential roles in the biogenesis of tubular recycling endosomes: first organizes phase separation and then the closed form formed by interaction with RAB8A promotes endosomal tubulation. This is MICAL-like protein 2 from Homo sapiens (Human).